The primary structure comprises 205 residues: Heat shock protein beta-11 (205 aa).

A sHSP domain is found at 67 to 180 (VSPMTTFKPI…NERVIPITYT (114 aa)). Positions 184-205 (KNPALQNSEPENQAVEAEAAEN) are disordered. A compositionally biased stretch (low complexity) spans 192 to 205 (EPENQAVEAEAAEN).

This sequence belongs to the small heat shock protein (HSP20) family. As to expression, expressed specifically in the rostral-most somites at 24 hpf. At 48 hpf, expression continues in the rostral-most somites and also in the notochord. Somite expression was restricted to the vicinity of the horizontal myoseptum. In adults, expressed in the heart.

The chain is Heat shock protein beta-11 (hspb11) from Danio rerio (Zebrafish).